Here is a 202-residue protein sequence, read N- to C-terminus: Na(+)-translocating NADH-quinone reductase subunit E (202 aa).

The next 6 helical transmembrane spans lie at 5-25, 35-55, 81-101, 114-134, 144-164, and 180-200; these read VSLF…FLGM, VSTA…TVPL, FLGL…LEMF, GVFL…LFMV, VVYG…LAGI, and LGIT…FGGM.

The protein belongs to the NqrDE/RnfAE family. In terms of assembly, composed of six subunits; NqrA, NqrB, NqrC, NqrD, NqrE and NqrF.

It localises to the cell inner membrane. The catalysed reaction is a ubiquinone + n Na(+)(in) + NADH + H(+) = a ubiquinol + n Na(+)(out) + NAD(+). In terms of biological role, NQR complex catalyzes the reduction of ubiquinone-1 to ubiquinol by two successive reactions, coupled with the transport of Na(+) ions from the cytoplasm to the periplasm. NqrA to NqrE are probably involved in the second step, the conversion of ubisemiquinone to ubiquinol. The chain is Na(+)-translocating NADH-quinone reductase subunit E from Psychrobacter arcticus (strain DSM 17307 / VKM B-2377 / 273-4).